The sequence spans 540 residues: Glucose-6-phosphate isomerase (540 aa).

Glu-350 (proton donor) is an active-site residue. Active-site residues include His-381 and Lys-503.

This sequence belongs to the GPI family.

Its subcellular location is the cytoplasm. The enzyme catalyses alpha-D-glucose 6-phosphate = beta-D-fructose 6-phosphate. It participates in carbohydrate biosynthesis; gluconeogenesis. It functions in the pathway carbohydrate degradation; glycolysis; D-glyceraldehyde 3-phosphate and glycerone phosphate from D-glucose: step 2/4. In terms of biological role, catalyzes the reversible isomerization of glucose-6-phosphate to fructose-6-phosphate. The polypeptide is Glucose-6-phosphate isomerase (Burkholderia pseudomallei (strain 1106a)).